The primary structure comprises 465 residues: Probable multidrug resistance protein NorM (465 aa).

The next 10 membrane-spanning stretches (helical) occupy residues 50 to 72, 92 to 114, 127 to 149, 164 to 186, 193 to 215, 248 to 270, 283 to 305, 320 to 342, 393 to 412, and 422 to 444; these read MAAI…GLLL, HQVR…LIYH, HLAQ…YLLL, PAMI…FIYG, FGAV…LMIS, GLPI…LLLS, ALNT…TILV, ISYV…TVVL, ILYI…GYIL, and MGPT…LLFY.

The protein belongs to the multi antimicrobial extrusion (MATE) (TC 2.A.66.1) family.

It localises to the cell inner membrane. Functionally, multidrug efflux pump. In Mannheimia succiniciproducens (strain KCTC 0769BP / MBEL55E), this protein is Probable multidrug resistance protein NorM (norM).